A 450-amino-acid chain; its full sequence is Glucose-6-phosphate isomerase (450 aa).

Glu291 (proton donor) is an active-site residue. Active-site residues include His312 and Lys426.

Belongs to the GPI family.

The protein localises to the cytoplasm. It carries out the reaction alpha-D-glucose 6-phosphate = beta-D-fructose 6-phosphate. Its pathway is carbohydrate biosynthesis; gluconeogenesis. It participates in carbohydrate degradation; glycolysis; D-glyceraldehyde 3-phosphate and glycerone phosphate from D-glucose: step 2/4. Its function is as follows. Catalyzes the reversible isomerization of glucose-6-phosphate to fructose-6-phosphate. The chain is Glucose-6-phosphate isomerase from Clostridium botulinum (strain Langeland / NCTC 10281 / Type F).